The following is a 362-amino-acid chain: H-2 class I histocompatibility antigen, D-K alpha chain (362 aa).

The first 24 residues, 1 to 24, serve as a signal peptide directing secretion; that stretch reads MGAMVPRTLLLLLAAALAPAQTRA. The tract at residues 25 to 114 is alpha-1; the sequence is GPHSLRYFET…LLRYYNQSEG (90 aa). The Extracellular segment spans residues 25-306; that stretch reads GPHSLRYFET…RWEPPPSTDS (282 aa). N110 carries N-linked (GlcNAc...) asparagine glycosylation. Residues 115–206 are alpha-2; the sequence is GSHTIQRLSG…ELGNATLLHT (92 aa). C125 and C188 are disulfide-bonded. N-linked (GlcNAc...) asparagine glycosylation is found at N200 and N280. The segment at 207-298 is alpha-3; that stretch reads DSPKAHVTHH…GLPEPLTLRW (92 aa). One can recognise an Ig-like C1-type domain in the interval 209–297; that stretch reads PKAHVTHHPR…EGLPEPLTLR (89 aa). C227 and C283 form a disulfide bridge. The segment at 299 to 306 is connecting peptide; it reads EPPPSTDS. The helical transmembrane segment at 307 to 333 threads the bilayer; the sequence is YMVIVAVLGVLGAVAIIGAVVAFVMMM. The Cytoplasmic portion of the chain corresponds to 334-362; the sequence is RRNTGGKGGDYTLTPGSQSSEMSLPDCKA. The disordered stretch occupies residues 340–362; sequence KGGDYTLTPGSQSSEMSLPDCKA. S353 and S356 each carry phosphoserine.

It belongs to the MHC class I family. As to quaternary structure, heterodimer of an alpha chain and a beta chain (beta-2-microglobulin). Post-translationally, polyubiquitinated in case of infection by murid herpesvirus 4, by the viral E3 ligase K3 (mK3), leading to target the protein for rapid degradation by the endoplasmic reticulum-associated degradation (ERAD) system. Ubiquitination takes place on lysine, as well as serine and threonine residues present in the cytoplasmic tail. Hydroxylated serine and threonine residues in the cytoplasmic tail are subject to ubiquitination via ester bonds instead of the classical isopeptide linkage. Hydroxylation of residues in the cytoplasmic tail.

It is found in the membrane. Functionally, involved in the presentation of foreign antigens to the immune system. This Mus musculus (Mouse) protein is H-2 class I histocompatibility antigen, D-K alpha chain (H2-D1).